Reading from the N-terminus, the 100-residue chain is Urease subunit gamma (100 aa).

The protein belongs to the urease gamma subunit family. In terms of assembly, heterotrimer of UreA (gamma), UreB (beta) and UreC (alpha) subunits. Three heterotrimers associate to form the active enzyme.

The protein localises to the cytoplasm. It catalyses the reaction urea + 2 H2O + H(+) = hydrogencarbonate + 2 NH4(+). It participates in nitrogen metabolism; urea degradation; CO(2) and NH(3) from urea (urease route): step 1/1. The sequence is that of Urease subunit gamma from Delftia acidovorans (strain DSM 14801 / SPH-1).